The primary structure comprises 77 residues: Delta-conotoxin GmVIA (77 aa).

A signal peptide spans 1-22 (MKLTCMMIVAVLFLTAWTFVTA). Residues 23–48 (DDSGNGMEILFPKAGHEMENLEVSNR) constitute a propeptide that is removed on maturation. 3 disulfides stabilise this stretch: C52–C67, C59–C72, and C66–C76.

Belongs to the conotoxin O1 superfamily. As to expression, expressed by the venom duct.

Its subcellular location is the secreted. In terms of biological role, delta-conotoxins bind to site 6 of voltage-gated sodium channels (Nav) and inhibit the inactivation process. This toxin shows weak activity on rNav1.2/SCN2A (EC(50)=2.5 uM) and rNav1.4/SCN4A (EC(50)=4.8 uM). In vivo, injection of this peptide in the head region of garden snail induces retraction of the head and body into shell. This is followed by secretion of viscous green slime and a convulsive undulation into and out of the shell. No apparent biological activity was observed when a much greater dose of peptide was injected intraperitoneally into mice. The chain is Delta-conotoxin GmVIA from Conus gloriamaris (Glory-of-the-Sea cone).